The primary structure comprises 1627 residues: MHQTKKTALSKSTWILILTATASLATGLTVVGHFTSTTTTLKRQQFSYTRPDEVALRHTNAINPRLTPWTYRNTSFSSLPLTGENPGAWALVRDNSAKGITAGSGSQQTTYDPTRTEAALTASTTFALRRYDLAGRALYDLDFSKLNPQTPTRDQTGQITFNPFGGFGLSGAAPQQWNEVKNKVPVEVAQDPSNPYRFAVLLVPRSVVYYEQLQRGLGLPQQRTESGQNTSTTGAMFGLKVKNAEADTAKSNEKLQGAEATGSSTTSGSGQSTQRGGSSGDTKVKALKIEVKKKSDSEDNGQLQLEKNDLANAPIKRSEESGQSVQLKADDFGTALSSSGSGGNSNPGSPTPWRPWLATEQIHKDLPKWSASILILYDAPYARNRTAIDRVDHLDPKAMTANYPPSWRTPKWNHHGLWDWKARDVLLQTTGFFNPRRHPEWFDGGQTVADNEKTGFDVDNSENTKQGFQKEADSDKSAPIALPFEAYFANIGNLTWFGQALLVFGGNGHVTKSAHTAPLSIGVFRVRYNATGTSATVTGWPYALLFSGMVNKQTDGLKDLPFNNNRWFEYVPRMAVAGAKFVGRELVLAGTITMGDTATVPRLLYDELESNLNLVAQGQGLLREDLQLFTPYGWANRPDLPIGAWSSSSSSSHNAPYYFHNNPDWQDRPIQNVVDAFIKPWEDKNGKDDAKYIYPYRYSGMWAWQVYNWSNKLTDQPLSADFVNENAYQPNSLFAAILNPELLAALPDKVKYGKENEFAANEYERFNQKLTVAPTQGTNWSHFSPTLSRFSTGFNLVGSVLDQVLDYVPWIGNGYRYGNNHRGVDDITAPQTSAGSSSGISTNTSGSRSFLPTFSNIGVGLKANVQATLGGSQTMITGGSPRRTLDQANLQLWTGAGWRNDKASSGQSDENHTKFTSATGMDQQGQSGTSAGNPDSLKQDNISKSGDSLTTQDGNAIDQQEATNYTNLPPNLTPTADWPNALSFTNKNNAQRAQLFLRGLLGSIPVLVNRSGSDSNKFQATDQKWSYTDLHSDQTKLNLPAYGEVNGLLNPALVETYFGNTRAGGSGSNTTSSPGIGFKIPEQNNDSKATLITPGLAWTPQDVGNLVVSGTTVSFQLGGWLVTFTDFVKPRAGYLGLQLTGLDASDATQRALIWAPRPWAAFRGSWVNRLGRVESVWDLKGVWADQAQSDSQGSTTTATRNALPEHPNALAFQVSVVEASAYKPNTSSGQTQSTNSSPYLHLVKPKKVTQSDKLDDDLKNLLDPNQVRTKLRQSFGTDHSTQPQPQSLKTTTPVFGTSSGNLSSVLSGGGAGGGSSGSGQSGVDLSPVEKVSGWLVGQLPSTSDGNTSSTNNLAPNTNTGNDVVGVGRLSESNAAKMNDDVDGIVRTPLAELLDGEGQTADTGPQSVKFKSPDQIDFNRLFTHPVTDLFDPVTMLVYDQYIPLFIDIPASVNPKMVRLKVLSFDTNEQSLGLRLEFFKPDQDTQPNNNVQVNPNNGDFLPLLTASSQGPQTLFSPFNQWPDYVLPLAITVPIVVIVLSVTLGLAIGIPMHKNKQALKAGFALSNQKVDVLTKAVGSVFKEIINRTGISQAPKRLKQTSAAKPGAPRPPVPPKPGAPKPPVQPPKKPA.

An N-terminal signal peptide occupies residues 1–59 (MHQTKKTALSKSTWILILTATASLATGLTVVGHFTSTTTTLKRQQFSYTRPDEVALRHT). Disordered stretches follow at residues 219–238 (LPQQ…AMFG), 252–355 (NEKL…PWRP), 898–953 (WRND…TTQD), and 1274–1362 (SFGT…TGND). Residues 224–234 (TESGQNTSTTG) are compositionally biased toward polar residues. A compositionally biased stretch (low complexity) spans 261–276 (TGSSTTSGSGQSTQRG). The segment covering 282-297 (TKVKALKIEVKKKSDS) has biased composition (basic and acidic residues). Composition is skewed to polar residues over residues 903–933 (ASSG…SAGN), 939–953 (QDNI…TTQD), and 1274–1297 (SFGT…VFGT). Gly residues predominate over residues 1307-1320 (SGGGAGGGSSGSGQ). Low complexity predominate over residues 1341-1352 (STSDGNTSSTNN). Positions 1403 to 1415 (GPQSVKFKSPDQI) are cytadherence epitope. Residues 1527–1547 (AITVPIVVIVLSVTLGLAIGI) form a helical membrane-spanning segment. Residues 1589-1627 (QAPKRLKQTSAAKPGAPRPPVPPKPGAPKPPVQPPKKPA) are disordered. The segment covering 1604 to 1627 (APRPPVPPKPGAPKPPVQPPKKPA) has biased composition (pro residues).

It belongs to the adhesin P1 family.

Its subcellular location is the cell membrane. The protein localises to the cell projection. The protein resides in the attachment organelle. It is found in the cell surface. Its function is as follows. The protein is the major adhesin mediating the attachment of this mycoplasma to respiratory epithelium. In Mycoplasma pneumoniae (strain ATCC 29342 / M129 / Subtype 1) (Mycoplasmoides pneumoniae), this protein is Adhesin P1 (mgpA).